A 550-amino-acid polypeptide reads, in one-letter code: Arginine--tRNA ligase (550 aa).

A 'HIGH' region motif is present at residues 130–140; that stretch reads ANPTGPIHLGG.

Belongs to the class-I aminoacyl-tRNA synthetase family. As to quaternary structure, monomer.

The protein resides in the cytoplasm. It catalyses the reaction tRNA(Arg) + L-arginine + ATP = L-arginyl-tRNA(Arg) + AMP + diphosphate. In Corynebacterium glutamicum (strain R), this protein is Arginine--tRNA ligase.